Consider the following 131-residue polypeptide: UPF0382 inner membrane protein YgdD (131 aa).

Topologically, residues 1–4 are periplasmic; it reads MTSR. Residues 5-25 traverse the membrane as a helical segment; that stretch reads FMLIFAAISGFIFVALGAFGA. The Cytoplasmic portion of the chain corresponds to 26-64; that stretch reads HVLSKTMGAVEMGWIQTGLEYQAFHTLAILGLAVAMQRR. A helical transmembrane segment spans residues 65-85; that stretch reads ISIWFYWSSVFLALGTVLFSG. At 86–97 the chain is on the periplasmic side; that stretch reads SLYCLALSHLRL. A helical transmembrane segment spans residues 98-118; it reads WAFVTPVGGVSFLAGWALMLV. Topologically, residues 119–131 are cytoplasmic; the sequence is GAIRLKRKGVSHE.

Belongs to the UPF0382 family.

It localises to the cell inner membrane. The protein is UPF0382 inner membrane protein YgdD (ygdD) of Escherichia coli O157:H7.